Consider the following 613-residue polypeptide: MPIYRSATTTHGRNMAGARALWRATGVKDDDFGKPIIAVVNSFTQFVPGHVHLKDMGQLVAGEIEKAGGIAKEFNTIAVDDGIAMGHGGMLYSLPSRELIADSVEYMVNAHCADAMVCISNCDKITPGMMMAAMRLNIPVIFVSGGPMEAGKTKLSDQIIKLDLVDAMIQGADPTISDEQSEQVERSACPTCGSCSGMFTANSMNCLTEALGLSQPGNGSMLATHADREELFINAGKRIVDLTKRYYEQDDESALPRNIANRAAFDNAMALDIAMGGSSNTVLHLLAAAQEGDIDFDMGDIDEMSRRVPHLCKVAPSTPKYHMEDVHRAGGVMAILGELDRAGLLNNQTRTVLGLSMQEQLAQYDIMQTEDEAVLKFFRAGPAGIRTTKAFSQDCRWDRLDDDRKEGCIRTKENAFSQEGGLAVLSGNIAVDGCIVKTAGVDEENLKFQGPAIVFESQDTAVDGILAGKVKAGEVVVIRYEGPKGGPGMQEMLYPTTYLKSMGLGKSCALLTDGRFSGGTSGLSIGHASPEAASGGVIGLVNTGDIITIDIPSRSITLDVPEAELEARRVKQDALGWKPENRQREVSFALKAYASMATSADKGAVRDKSKLEG.

Asp-81 provides a ligand contact to Mg(2+). Cys-122 is a [2Fe-2S] cluster binding site. Residues Asp-123 and Lys-124 each contribute to the Mg(2+) site. Residue Lys-124 is modified to N6-carboxylysine. A [2Fe-2S] cluster-binding site is contributed by Cys-195. Glu-491 lines the Mg(2+) pocket. The active-site Proton acceptor is the Ser-517.

It belongs to the IlvD/Edd family. Homodimer. [2Fe-2S] cluster is required as a cofactor. Mg(2+) serves as cofactor.

It carries out the reaction (2R)-2,3-dihydroxy-3-methylbutanoate = 3-methyl-2-oxobutanoate + H2O. The enzyme catalyses (2R,3R)-2,3-dihydroxy-3-methylpentanoate = (S)-3-methyl-2-oxopentanoate + H2O. It functions in the pathway amino-acid biosynthesis; L-isoleucine biosynthesis; L-isoleucine from 2-oxobutanoate: step 3/4. It participates in amino-acid biosynthesis; L-valine biosynthesis; L-valine from pyruvate: step 3/4. In terms of biological role, functions in the biosynthesis of branched-chain amino acids. Catalyzes the dehydration of (2R,3R)-2,3-dihydroxy-3-methylpentanoate (2,3-dihydroxy-3-methylvalerate) into 2-oxo-3-methylpentanoate (2-oxo-3-methylvalerate) and of (2R)-2,3-dihydroxy-3-methylbutanoate (2,3-dihydroxyisovalerate) into 2-oxo-3-methylbutanoate (2-oxoisovalerate), the penultimate precursor to L-isoleucine and L-valine, respectively. The polypeptide is Dihydroxy-acid dehydratase (Vibrio atlanticus (strain LGP32) (Vibrio splendidus (strain Mel32))).